The sequence spans 1359 residues: MLKNLRNKIKEKLTYSLLSSQEFDNNKDYYQQPCPEDNANLWSRLTFGWAQRMLISGYFNGPLEMSDINDLPKDIKVQSSIQLLNNINLNKNNNSRWPLIKHFYKQFLYRNKLTIFLQILTNILSILSPLSLKYFIQFIQSTNKERSFLAGIGYCILLLIASFSYTFSQQLLMWFAMKSSLEIKGCLSIKVYEKTLKLTTCGGKNYNPGSIMNLLSVDVGIISNFFWIEHMGIFAFSSQMIGLLALLCWVIGWSGLVGFAIMVITFPINTYIGSKIGKNLKESMGYSDKRTNLTSEFINGIRFLKMYAWEKLFLDRIEEQRSLQLKYLYKRMIFWIFAEMMKQAVNAIVLVLTFIVYSINNEITLEVAFTTISIFVSLRIPLLRLPNSIQQLQSLIPIAKRVEDFLKSPEIQQNHSSNREEEEEDEYDDDINSDGDISIHNGSFNWNQVDSNGSGNGNGNQQQQQQQQQQQQQQQQQQQQQSYTLNNINFKAPAGKLTIICGVVGSGKTSLVSGLIGEIYKVSGRVNTPNKISFTTQQSFLLSTSLRENILFGNEMNLERYKKVIEACCLAPDLLQLAAKDLTEIGERGINLSGGQKQRISLARALYANSDCYILDEPLSAVDPEVATHLFNHCIQGMMNDKTRILITHQLQFIPSADHIVVVDNGKLVQGTYSELKSKGIDFESIMKTKKLNIDNQQQQQQHEKENDIVLSDEDSNNSIKNNNNISNLIDIDEVISDENDSNLIERSKLLVDEDRNEGSVNLRVYKEYFKHGSSIPLFIMTCIVYMISQIIYQMSDFWLSTWSQRSIPDKTDKYYISIYLLFIVGFIIFLVIRYFMMAHVTFSASKNLHQSLLKSVGFASCQFFDTNPSGRILNRFSKDISDVDLLLFDLFSDVLYCGSTVLVSIGIMIYISPLIIIPFLLLIGIYYFIQRLYTESSRELKRLEAISRSPIFSLLQESFNGLVTIRSYKQQNKFISMMQDRINTNHRLSYYGFSVHRWVAVRLEFISSIVVFLAAFFSLFNSNAGFSVLSVTTALGMCSYLNWTVRQMVELEVKMNSVERIESYLNIPKEGNSKINFFRNEQQEEEEEEEEEFDFDNDDYDGFKLSKKWLTKGEIEFRNVEIKYGHSGESSLKNFTLKINQKDHIGIVGRTGAGKSTIGNGLFRMVECSKGSILIDGVDISKIGLHELRSSLGIVPQDPFIFSGTIRLNIDPFNKYTDSEIWVALEKVKLKSTISSMPLKLETMIEEGGDGLSFGQKQLLCLSRTILKNSKVVLMDEATSGIDYVTSDLIKQTINNCFKNCTMLTIAHRLDTIIDSTKIAVIDKGKLIEYDTPNNLIENQESRFSKLVKHHHNLFKEK.

Residues asparagine 111–serine 394 form the ABC transmembrane type-1 1 domain. 6 consecutive transmembrane segments (helical) span residues isoleucine 119–isoleucine 139, serine 147–phenylalanine 167, leucine 214–phenylalanine 234, leucine 244–isoleucine 264, methionine 332–leucine 352, and isoleucine 363–leucine 383. The interval proline 409–glutamine 478 is disordered. A compositionally biased stretch (acidic residues) spans glutamate 420–serine 433. Positions histidine 440 to aspartate 450 are enriched in polar residues. A compositionally biased stretch (low complexity) spans glycine 459–glutamine 478. In terms of domain architecture, ABC transporter 1 spans glutamine 470 to lysine 690. Glycine 502 to threonine 509 is a binding site for ATP. Residues leucine 763–arginine 1061 form the ABC transmembrane type-1 2 domain. Transmembrane regions (helical) follow at residues glycine 773–tyrosine 793, isoleucine 819–alanine 839, valine 884–valine 904, isoleucine 906–isoleucine 926, and tryptophan 999–phenylalanine 1021. Positions asparagine 1073–aspartate 1102 form a coiled coil. One can recognise an ABC transporter 2 domain in the interval isoleucine 1116–lysine 1350. Glycine 1150–serine 1157 serves as a coordination point for ATP.

Belongs to the ABC transporter superfamily. ABCC family. Conjugate transporter (TC 3.A.1.208) subfamily.

It is found in the membrane. The polypeptide is ABC transporter C family member 1 (abcC1) (Dictyostelium discoideum (Social amoeba)).